Reading from the N-terminus, the 154-residue chain is 6,7-dimethyl-8-ribityllumazine synthase (154 aa).

5-amino-6-(D-ribitylamino)uracil contacts are provided by residues phenylalanine 26, 60 to 62 (ALE), and 84 to 86 (CII). (2S)-2-hydroxy-3-oxobutyl phosphate is bound at residue 89-90 (ET). Histidine 92 serves as the catalytic Proton donor. Position 117 (asparagine 117) interacts with 5-amino-6-(D-ribitylamino)uracil. A (2S)-2-hydroxy-3-oxobutyl phosphate-binding site is contributed by arginine 131.

Belongs to the DMRL synthase family.

The catalysed reaction is (2S)-2-hydroxy-3-oxobutyl phosphate + 5-amino-6-(D-ribitylamino)uracil = 6,7-dimethyl-8-(1-D-ribityl)lumazine + phosphate + 2 H2O + H(+). The protein operates within cofactor biosynthesis; riboflavin biosynthesis; riboflavin from 2-hydroxy-3-oxobutyl phosphate and 5-amino-6-(D-ribitylamino)uracil: step 1/2. Its function is as follows. Catalyzes the formation of 6,7-dimethyl-8-ribityllumazine by condensation of 5-amino-6-(D-ribitylamino)uracil with 3,4-dihydroxy-2-butanone 4-phosphate. This is the penultimate step in the biosynthesis of riboflavin. The sequence is that of 6,7-dimethyl-8-ribityllumazine synthase from Polaromonas sp. (strain JS666 / ATCC BAA-500).